Reading from the N-terminus, the 536-residue chain is Phosphoenolpyruvate carboxykinase (ATP) (536 aa).

Residues Arg61, Tyr195, and Lys201 each contribute to the substrate site. Residues Lys201, His220, and 236–244 (GLSGTGKTT) each bind ATP. Residues Lys201 and His220 each contribute to the Mn(2+) site. Residue Asp257 coordinates Mn(2+). Glu285, Arg322, and Thr447 together coordinate ATP. Residue Arg322 coordinates substrate.

This sequence belongs to the phosphoenolpyruvate carboxykinase (ATP) family. The cofactor is Mn(2+).

The protein localises to the cytoplasm. The catalysed reaction is oxaloacetate + ATP = phosphoenolpyruvate + ADP + CO2. Its pathway is carbohydrate biosynthesis; gluconeogenesis. Its function is as follows. Involved in the gluconeogenesis. Catalyzes the conversion of oxaloacetate (OAA) to phosphoenolpyruvate (PEP) through direct phosphoryl transfer between the nucleoside triphosphate and OAA. This is Phosphoenolpyruvate carboxykinase (ATP) from Sinorhizobium fredii (strain NBRC 101917 / NGR234).